We begin with the raw amino-acid sequence, 388 residues long: Envelope protein F13 homolog (388 aa).

Residue Gly-2 is the site of N-myristoyl glycine; by host attachment. The region spanning 310 to 337 (GDAINNTKLLVVDDEYVHVSNADIDGTH) is the PLD phosphodiesterase domain.

Its subcellular location is the virion membrane. It is found in the host endoplasmic reticulum membrane. Envelope protein associated with the inner side of the enveloped virion (EV) membrane. The sequence is that of Envelope protein F13 homolog (P43K) from Molluscum contagiosum virus subtype 2 (MOCV).